A 3644-amino-acid polypeptide reads, in one-letter code: MVRETRHLWVGNLPENVREEKIIEHFKRYGRVESVKILPKRGSEGGVAAFVDFVDIKSAQKAHNSVNKMGDRDLRTDYNEPGTIPSAARGLDETVSIASRSREVSGFRGSAGGPAYGPPPSLHAREGRYERRLDGASDNRERAYEHSAYGHHERGTGAFDRTRHYDQDYYRDPRERTLQHGLYYTSRSRSPNRFDAHDPRYEPRAREQFTLPSVVHRDIYRDDITREVRGRRPERSYQHSRSRSPHSSQSRNQSPQRLASQASRPTRSPSGSGSRSRSSSSDSISSSSSSSNTDSSDSSSTASDDSPARSVQSAAVPAPTSQLLSSLEKDEPRKSFGIKVQNLPVRSIDTSLKDGLFHEFKKFGKVTSVQIHGASEERYGLVFFRQQEDQEKALTASKGKLFFGMQIEVTAWVGPETESENEFRPLDERIDEFHPKATRTLFIGNLEKTTTYHDLRNIFQRFGEIVDIDIKKVNGVPQYAFLQYCDIASVCKAIKKMDGEYLGNNRLKLGFGKSMPTNCVWLDGLSSNVSDQYLTRHFCRYGPVVKVVFDRLKGMALVLYSEIEDAQAAVKETKGRKIGGNKIKVDFANRESQLAFYHCMEKSGQDMRDFYEMLTERRAGQMAQSKHEDWSADAQSPHKCREERRGSYEYSQERTYYENVRTPGTYPEDSRRDYPARGREFYSEWETYQGEYYDSRYYDEPREYREYRSDPYEQDIREYSYRQRERERERERFESDRDHERRPIERSQSPVHLRRPQSPGVSPAHSERLPSDSERRLYRRSSERSGSCSSVSPPRYDKLEKARLERYTKNEKADKERTFDPERVERERRIVRKEKGEKDKAERQKRKGKAHSPSSQPSETEQENDREQSPEKPRGSTKLSRDRADKEGPAKNRLELVPCVVLTRVKEKEGKVIEHPPPEKLKARLGRDTTKASALDQKPQAAQGEPAKSDPARGKALREKVLPSHAEVGEKEGRTKLRKHLKAEQTPELSALDLEKLEARKRRFADSGLKIEKQKPEIKKTSPETEDTRILLKKQPDTSRDGVLLREGESERKPVRKEILKRESKKTKLERLNSALSPKDCQDPAAVSAGSGSRPSSDVHAGLGELTHGSVETQETQPKKAIPSKPQPKQLQLLENQGPEKEEVRKNYCRPREEPAEHRAGQEKPHGGNAEEKLGIDIDHTQSYRKQMEQSRRKQRMEMEIAKAEKFGSPKKDVDDYERRSLVHEVGKPPQDVTDDSPPSKKRRTDHVDFDICTKRERNYRSSRQISEDSERTSCSPSVRHGSFHDDDDPRGSPRLVSVKGSPKGDEKGLPYPNAAVRDDPLKCNPYDSGKREQTADTAKIKLSVLNSEGEPSRWDPPMKQDPSRFDVSFPNSVIKRDSLRKRSVRDLEPGEVPSDSDEDAEHRSQSPRASSFYDSPRLSFLLRDRDQKLRERDERLASSLERNKFYSFALDKTITPDTKALLERAKSLSSSREENWSFLDWDSRFANFRNNKDKEKVDSAPRPIPSWYMKKKKIRTDSEGKLDDKKDERREEEQERQELFASRFLHSSIFEQDSKRLQHLERKSEESDFPPGRLYGRQASEGANSTSDSVQEPVVLFHSRFMELTRMQQKEKEKDQKPKEAEKQEEPETHPKTPEPAAETKEPEPKAPVSAGLPAVTITVVTPEPASSAPEKAEEAAEAPSPAGEKPAEPAPVSEETKLVSEPVSVPVEQPRQSDVPPGEDSRDSQDSAALAPSAPQESAATDAVPCVNAEPLTPGTTVSQVESSVDPKPSSPQPLSKLTQRSEEAEEGKVEKPDTTPSTEPDATQNAGVASEAQPPASEDVEANPPVAAKDRKTNKSKRSKTSVQAAAASVVEKPVTRKSERIDREKLKRSSSPRGEAQKLLELKMEAEKITRTASKSSGGDTEHPEPSLPLSRSRRRNVRSVYATMTDHESRSPAKEPVEQPRVTRKRLERELQEAVVPPTTPRRGRPPKTRRRAEEDGEHERKEPAETPRPAEGWRSPRSQKSAAAAGPQGKRGRNEQKVEAAAEAGAQASTREGNPKSRGEREAASEPKRDRRDPSTDKSGPDTFPVEVLERKPPEKTYKSKRGRARSTRSGMDRAAHQRSLEMAARAAGQAADKEAGPAAASPQESESPQKGSGSSPQLANNPADPDREAEEESASASTAPPEGTQLARQIELEQAVQNIAKLPEPSAAAASKGTATATATAASEEPAPEHGHKPAHQASETELAAAIGSIISDASGEPENFSAPPSVPPGSQTHPREGMEPGLHEAESGILETGTATESSAPQVSALDPPEGSADTKETRGNSGDSVQEAKGSKAEVTPPRKDKGRQKTTRRRKRNANKKVVAITETRASEAEQTQSESPAAEEATAATPEAPQEEKPSEKPPSPPAECTFDPSKTPPAESLSQENSAAEKTPCKAPVLPALPPLSQPALMDDGPQARFKVHSIIESDPVTPPSDSGIPPPTIPLVTIAKLPPPVIPGGVPHQSPPPKVTEWITRQEEPRAQSTPSPALPPDTKASDMDTSSSTLRKILMDPKYVSATGVTSTSVTTAIAEPVSAPCLQEAPAPPCDPKHPPLEGVSAAAVPNADTQASEVPVAADKEKVAPVIAPKITSVISRMPVSIDLENSQKITLAKPAPQTLTGLVSALTGLVNVSLVPVNALKGPVKGSVATLKGLVSTPAGPVNLLKGPVNVLTGPVNVLTTPVSATVGTVNAAPGPVTAACGVTATTGTAAVTGAVTAPAAKGKQRASSNENSRFHPGSMSVIDDRPADTGSGAGLRVNTSEGVVLLSYSGQKTEGPQRISAKISQIPPASAMDIEFQQSVSKSQVKADSITPTQSAPKGPQTPSAFANVAAHSTLVLTAQTYNASPVISSVKTDRPSLEKPEPIHLSVSTPVTQGGTVKVLTQGINTPPVLVHNQLVLTPSIVTTNKKLADPVTLKIETKVLQPANLGPTLTPHHPPALPSKLPAEVNHVPSGPSTPADRTIAHLATPKPDTHSPRPTGPTPGLFPRPCHPSSTTSTALSTNATVMLAAGIPVPQFISSIHPEQSVIMPPHSITQTVSLGHLSQGEVRMSTPTLPSITYSIRPETLHSPRAPLQPQQIEARAPQRVGTPQPATTGVPALATQHPPEEEVHYHLPVARAAAPVQSEVLVMQSEYRLHPYTVPRDVRIMVHPHVTAVSEQPRATEGVVKVPPANKAPQQLVKEAVKTSDAKAVPAPAPVPVPVPVPTPAPPPHGEARILTVTPSSQLQGLPLTPPVVVTHGVQIVHSSGELFQEYRYGDVRTYHAPAQQLTHTQFPVASSISLASRTKTSAQVPPEGEPLQSTQSAQPAPSTQATQPIPPAPPCQPSQLSQPAQPPSGKIPQVSQEAKGTQTGGVEQTRLPAIPTNRPSEPHAQLQRAPVETAQPAHPSPVSVSMKPDLPSPLSSQAAPKQPLFVPANSGPSTPPGLALPHAEVQPAPKQESSPHGTPQRPVDMVQLLKKYPIVWQGLLALKNDTAAVQLHFVSGNNVLAHRSLPLSEGGPPLRIAQRMRLEASQLEGVARRMTVETDYCLLLALPCGRDQEDVVSQTESLKAAFITYLQAKQAAGIINVPNPGSNQPAYVLQIFPPCEFSESHLSRLAPDLLASISNISPHLMIVIASV.

A DNA-binding region spans residues 1 to 574 (MVRETRHLWV…DAQAAVKETK (574 aa)). In terms of domain architecture, RRM 1 spans 6–81 (RHLWVGNLPE…RDLRTDYNEP (76 aa)). Phosphoserine is present on Ser-99. Disordered stretches follow at residues 103 to 124 (EVSGFRGSAGGPAYGPPPSLHA), 170 to 209 (YRDPRERTLQHGLYYTSRSRSPNRFDAHDPRYEPRAREQF), and 225 to 331 (TREV…EKDE). Arg-108 carries the omega-N-methylarginine modification. A phosphoserine mark is found at Ser-188 and Ser-190. Composition is skewed to basic and acidic residues over residues 192 to 207 (NRFDAHDPRYEPRARE) and 225 to 237 (TREVRGRRPERSY). Residues 245-310 (PHSSQSRNQS…TASDDSPARS (66 aa)) are compositionally biased toward low complexity. A Phosphoserine modification is found at Ser-310. 3 RRM domains span residues 336 to 416 (FGIK…VGPE), 439 to 514 (RTLF…FGKS), and 518 to 590 (NCVW…FANR). Residues 559-575 (LYSEIEDAQAAVKETKG) are a coiled coil. Disordered regions lie at residues 625 to 673 (SKHE…SRRD) and 716 to 1413 (IREY…ASSF). 2 stretches are compositionally biased toward basic and acidic residues: residues 639-656 (KCREERRGSYEYSQERTY) and 716-745 (IREYSYRQRERERERERFESDRDHERRPIE). Phosphoserine is present on Ser-647. Phosphoserine is present on residues Ser-747, Ser-749, Ser-758, and Ser-762. Basic and acidic residues predominate over residues 765–783 (HSERLPSDSERRLYRRSSE). Low complexity predominate over residues 784–794 (RSGSCSSVSPP). Ser-792 is modified (phosphoserine). Basic and acidic residues predominate over residues 795-842 (RYDKLEKARLERYTKNEKADKERTFDPERVERERRIVRKEKGEKDKAE). Residues 822-850 (ERVERERRIVRKEKGEKDKAERQKRKGKA) are a coiled coil. Phosphoserine occurs at positions 852, 855, and 869. Basic and acidic residues-rich tracts occupy residues 863-894 (ENDREQSPEKPRGSTKLSRDRADKEGPAKNRL), 904-930 (RVKEKEGKVIEHPPPEKLKARLGRDTT), 947-975 (AKSDPARGKALREKVLPSHAEVGEKEGRT), and 1009-1071 (LKIE…KLER). Ser-1077 and Ser-1183 each carry phosphoserine. Residues 1138–1227 (GPEKEEVRKN…ERRSLVHEVG (90 aa)) show a composition bias toward basic and acidic residues. Residues 1185–1206 (RKQMEQSRRKQRMEMEIAKAEK) adopt a coiled-coil conformation. A phosphoserine mark is found at Ser-1209, Ser-1237, Ser-1267, Ser-1276, Ser-1283, Ser-1293, Ser-1298, Ser-1302, and Ser-1348. Residues 1246–1272 (DHVDFDICTKRERNYRSSRQISEDSER) are compositionally biased toward basic and acidic residues. A compositionally biased stretch (basic and acidic residues) spans 1283–1292 (SFHDDDDPRG). A compositionally biased stretch (basic and acidic residues) spans 1351–1365 (EPSRWDPPMKQDPSR). A phosphoserine mark is found at Ser-1395 and Ser-1397. Thr-1454 and Thr-1456 each carry phosphothreonine. 2 disordered regions span residues 1494-1538 (DKEK…QERQ) and 1557-2447 (RLQH…ARFK). A coiled-coil region spans residues 1509–1544 (YMKKKKIRTDSEGKLDDKKDERREEEQERQELFASR). Composition is skewed to basic and acidic residues over residues 1516–1538 (RTDSEGKLDDKKDERREEEQERQ) and 1557–1567 (RLQHLERKSEE). Over residues 1582–1591 (EGANSTSDSV) the composition is skewed to polar residues. Residues 1601–1646 (RFMELTRMQQKEKEKDQKPKEAEKQEEPETHPKTPEPAAETKEPEP) show a composition bias toward basic and acidic residues. The stretch at 1607-1627 (RMQQKEKEKDQKPKEAEKQEE) forms a coiled coil. The residue at position 1634 (Thr-1634) is a Phosphothreonine. Low complexity predominate over residues 1701-1710 (VSEPVSVPVE). Polar residues predominate over residues 1756–1765 (PGTTVSQVES). Residues 1782-1796 (QRSEEAEEGKVEKPD) show a composition bias toward basic and acidic residues. Residues 1797–1810 (TTPSTEPDATQNAG) are compositionally biased toward polar residues. Position 1844 is a phosphothreonine (Thr-1844). 2 stretches are compositionally biased toward basic and acidic residues: residues 1857 to 1871 (PVTRKSERIDREKLK) and 1879 to 1894 (EAQKLLELKMEAEKIT). Phosphoserine occurs at positions 1915 and 1936. Residues 1930-1943 (TDHESRSPAKEPVE) show a composition bias toward basic and acidic residues. A Phosphothreonine modification is found at Thr-1965. Basic residues predominate over residues 1967–1976 (RRGRPPKTRR). Basic and acidic residues-rich tracts occupy residues 1977 to 1991 (RAEEDGEHERKEPAE), 2039 to 2066 (GNPKSRGEREAASEPKRDRRDPSTDKSG), 2074 to 2084 (VLERKPPEKTY), and 2097 to 2106 (GMDRAAHQRS). Phosphoserine occurs at positions 2128 and 2134. The segment covering 2129-2147 (PQESESPQKGSGSSPQLAN) has biased composition (polar residues). Positions 2138 to 2462 (GSGSSPQLAN…ESDPVTPPSD (325 aa)) are interaction with MSX2. The residue at position 2171 (Thr-2171) is a Phosphothreonine. 2 stretches are compositionally biased toward low complexity: residues 2191–2212 (EPSAAAASKGTATATATAASEE) and 2231–2242 (AAAIGSIISDAS). The 489-residue stretch at 2216 to 2704 (EHGHKPAHQA…NVLTGPVNVL (489 aa)) folds into the RID domain. The span at 2261 to 2274 (HPREGMEPGLHEAE) shows a compositional bias: basic and acidic residues. Positions 2281–2290 (GTATESSAPQ) are enriched in polar residues. Over residues 2318 to 2329 (KGSKAEVTPPRK) the composition is skewed to basic and acidic residues. Positions 2330 to 2345 (DKGRQKTTRRRKRNAN) are enriched in basic residues. Residues 2359 to 2379 (AEQTQSESPAAEEATAATPEA) show a composition bias toward low complexity. Residue Ser-2366 is modified to Phosphoserine. At Thr-2419 the chain carries Phosphothreonine. Ser-2450 and Ser-2454 each carry phosphoserine. Disordered stretches follow at residues 2453 to 2472 (ESDPVTPPSDSGIPPPTIPL), 2481 to 2528 (PVIP…MDTS), 2745 to 2781 (AAKGKQRASSNENSRFHPGSMSVIDDRPADTGSGAGL), and 2829 to 2849 (SQVKADSITPTQSAPKGPQTP). Phosphothreonine is present on Thr-2458. A Phosphoserine modification is found at Ser-2491. The interval 2706 to 2845 (TPVSATVGTV…ITPTQSAPKG (140 aa)) is interaction with RBPSUH. Phosphothreonine is present on residues Thr-2913 and Thr-2925. Residues 2974–3023 (NHVPSGPSTPADRTIAHLATPKPDTHSPRPTGPTPGLFPRPCHPSSTTST) are disordered. The span at 3003–3015 (PTGPTPGLFPRPC) shows a compositional bias: pro residues. Asymmetric dimethylarginine is present on residues Arg-3088 and Arg-3096. A disordered region spans residues 3310-3473 (RTKTSAQVPP…QESSPHGTPQ (164 aa)). Over residues 3323–3340 (PLQSTQSAQPAPSTQATQ) the composition is skewed to low complexity. Residues 3366–3379 (QVSQEAKGTQTGGV) show a composition bias toward polar residues. Residue Ser-3413 is modified to Phosphoserine. An SPOC domain is found at 3478-3644 (MVQLLKKYPI…PHLMIVIASV (167 aa)).

This sequence belongs to the RRM Spen family. In terms of assembly, interacts with NCOR2, HDAC1, HDAC2, RBBP4, MBD3 and MTA1L1. Interacts with the nuclear receptors RAR and PPARD. Interacts with RAR in absence of ligand. Binds to the steroid receptor RNA coactivator SRA. Interacts with MSX2. Interacts with RBPSUH; this interaction may prevent the interaction between RBPSUH and NOTCH1. Binds to HIPK3. In terms of tissue distribution, highly expressed in testis. Expressed at lower level in brain, lung, spleen, liver and kidney. Weakly expressed in cardiac and skeletal muscles and ovary. In spleen, it is expressed in follicular B-cells, while it is weakly expressed in marginal zone B-cells.

It localises to the nucleus. Its function is as follows. May serve as a nuclear matrix platform that organizes and integrates transcriptional responses. In osteoblasts, supports transcription activation: synergizes with RUNX2 to enhance FGFR2-mediated activation of the osteocalcin FGF-responsive element (OCFRE). Has also been shown to be an essential corepressor protein, which probably regulates different key pathways, such as the Notch pathway. Negative regulator of the Notch pathway via its interaction with RBPSUH, which prevents the association between NOTCH1 and RBPSUH, and therefore suppresses the transactivation activity of Notch signaling. Blocks the differentiation of precursor B-cells into marginal zone B-cells. Probably represses transcription via the recruitment of large complexes containing histone deacetylase proteins. May bind both to DNA and RNA. In Mus musculus (Mouse), this protein is Msx2-interacting protein (Spen).